We begin with the raw amino-acid sequence, 467 residues long: MKEYPSVTVIGAGLAGSEAAWQIASAGIKVTLFEMRPKKKSLAHHTSEFAELVCSNSFGALSSDRAAGLLQEELRTLQSIVINNADKYSVPAGGALAVDRSQFSLSITNEVSSHPLITIIRDECPCLPKAHQITILATGPLTSELLAKDIKEFTGEKECHFFDAASPIITGESIDFLTAFRASRYDKGDADYVNCPMNEDSYIKFHSELIKAEQAELKDFEKESANFFEGCLPIEQLAKRGIETMRYGPLKPIGIWDPRWGDVNDKSIRRLKRAHAVVQLRQEDKAGKLWNLVGFQTNLKWGEQKRIFRMIPGLSKAEFIRFGVMHRNTFIESPKLIEPTLQFTNRKTLFAAGQLTGTEGYAAAVAGGWLAGTNAALLAKGLDTITLPSSTMIGALTNFVSNSQASLRVKNKKNFQPMPANFGILPELDIRVHNKRERYKEYRDRALRQIKKLRETLLDKSSSPTNI.

11-16 (GAGLAG) contributes to the FAD binding site.

Belongs to the MnmG family. TrmFO subfamily. FAD is required as a cofactor.

The protein localises to the cytoplasm. The enzyme catalyses uridine(54) in tRNA + (6R)-5,10-methylene-5,6,7,8-tetrahydrofolate + NADH + H(+) = 5-methyluridine(54) in tRNA + (6S)-5,6,7,8-tetrahydrofolate + NAD(+). It catalyses the reaction uridine(54) in tRNA + (6R)-5,10-methylene-5,6,7,8-tetrahydrofolate + NADPH + H(+) = 5-methyluridine(54) in tRNA + (6S)-5,6,7,8-tetrahydrofolate + NADP(+). Catalyzes the folate-dependent formation of 5-methyl-uridine at position 54 (M-5-U54) in all tRNAs. This is Methylenetetrahydrofolate--tRNA-(uracil-5-)-methyltransferase TrmFO from Prochlorococcus marinus (strain NATL2A).